The primary structure comprises 525 residues: uncharacterized protein (525 aa).

Residues 21-48 constitute a DNA-binding region (zn(2)-C6 fungal-type); the sequence is CLICRSMRKKCDEVHPQCGRCLKAGKQC.

It is found in the cytoplasm. It localises to the nucleus. This is an uncharacterized protein from Schizosaccharomyces pombe (strain 972 / ATCC 24843) (Fission yeast).